A 344-amino-acid polypeptide reads, in one-letter code: S-methyl-5'-thioadenosine phosphorylase (344 aa).

Residues Thr51, 99–100 (RH), and 132–133 (SA) contribute to the phosphate site. Met234 is a substrate binding site. Ser235 is a phosphate binding site. 258–260 (DYD) provides a ligand contact to substrate.

Belongs to the PNP/MTAP phosphorylase family. MTAP subfamily. As to quaternary structure, homotrimer.

The protein localises to the cytoplasm. It is found in the nucleus. The enzyme catalyses S-methyl-5'-thioadenosine + phosphate = 5-(methylsulfanyl)-alpha-D-ribose 1-phosphate + adenine. It participates in amino-acid biosynthesis; L-methionine biosynthesis via salvage pathway; S-methyl-5-thio-alpha-D-ribose 1-phosphate from S-methyl-5'-thioadenosine (phosphorylase route): step 1/1. In terms of biological role, catalyzes the reversible phosphorylation of S-methyl-5'-thioadenosine (MTA) to adenine and 5-methylthioribose-1-phosphate. Involved in the breakdown of MTA, a major by-product of polyamine biosynthesis. Responsible for the first step in the methionine salvage pathway after MTA has been generated from S-adenosylmethionine. Has broad substrate specificity with 6-aminopurine nucleosides as preferred substrates. The sequence is that of S-methyl-5'-thioadenosine phosphorylase from Phaeosphaeria nodorum (strain SN15 / ATCC MYA-4574 / FGSC 10173) (Glume blotch fungus).